A 510-amino-acid polypeptide reads, in one-letter code: NAD(P)H-quinone oxidoreductase subunit 2 A, chloroplastic (510 aa).

The next 13 helical transmembrane spans lie at 24 to 44, 57 to 77, 99 to 119, 124 to 144, 149 to 169, 183 to 203, 227 to 247, 295 to 315, 323 to 343, 347 to 367, 395 to 415, 418 to 438, and 484 to 504; these read LLLFHGSFIFPECILIFGLIL, IPWLYFISSTSLVMSITALLF, IFQFLILLCSTLCIPLSVEYI, MAITEFLLFVLTATLGGMFLC, LITIFVAPECFSLCSYLLSGY, YLLMGGASSSILVHGFSWLYG, PGISIALIFITVGIGFKLSPA, WHLLLEILAILSMILGNLIAI, MLAYSSIGQIGYVIIGIIVGD, GYASMITYMLFYISMNLGTFA, ALSSALCLLSLGGLPPLAGFF, LHLFWCGWQAGLYFLVSIGLL, and MIVCVIASTIPGISMNPIIAI.

This sequence belongs to the complex I subunit 2 family. In terms of assembly, NDH is composed of at least 16 different subunits, 5 of which are encoded in the nucleus.

It is found in the plastid. The protein resides in the chloroplast thylakoid membrane. It carries out the reaction a plastoquinone + NADH + (n+1) H(+)(in) = a plastoquinol + NAD(+) + n H(+)(out). It catalyses the reaction a plastoquinone + NADPH + (n+1) H(+)(in) = a plastoquinol + NADP(+) + n H(+)(out). Functionally, NDH shuttles electrons from NAD(P)H:plastoquinone, via FMN and iron-sulfur (Fe-S) centers, to quinones in the photosynthetic chain and possibly in a chloroplast respiratory chain. The immediate electron acceptor for the enzyme in this species is believed to be plastoquinone. Couples the redox reaction to proton translocation, and thus conserves the redox energy in a proton gradient. This is NAD(P)H-quinone oxidoreductase subunit 2 A, chloroplastic from Platanus occidentalis (Sycamore).